The following is a 428-amino-acid chain: Putative aspergillopepsin A-like aspartic endopeptidase AFUA_2G15950 (428 aa).

The signal sequence occupies residues 1 to 19 (MHSLQSFLFLLLLGYGVFA). The propeptide at 20-90 (APTSPQAQSQ…GTAANLVTDV (71 aa)) is activation peptide. The Peptidase A1 domain maps to 110–425 (FVSPVTIGGQ…DLRGPSIGLA (316 aa)). Residue D126 is part of the active site. A glycan (N-linked (GlcNAc...) asparagine) is linked at N276. Residue D312 is part of the active site. N-linked (GlcNAc...) asparagine glycosylation is present at N380.

This sequence belongs to the peptidase A1 family.

Its subcellular location is the secreted. This Aspergillus fumigatus (strain ATCC MYA-4609 / CBS 101355 / FGSC A1100 / Af293) (Neosartorya fumigata) protein is Putative aspergillopepsin A-like aspartic endopeptidase AFUA_2G15950.